The primary structure comprises 229 residues: Ribonuclease 3 (229 aa).

Positions 5–127 constitute an RNase III domain; it reads LSRLERQLGY…LIGAIYLDAG (123 aa). Glutamate 40 serves as a coordination point for Mg(2+). The active site involves aspartate 44. Positions 113 and 116 each coordinate Mg(2+). The active site involves glutamate 116. One can recognise a DRBM domain in the interval 154–224; the sequence is DPKTRLQEFL…AAAALIALGV (71 aa).

This sequence belongs to the ribonuclease III family. As to quaternary structure, homodimer. The cofactor is Mg(2+).

It is found in the cytoplasm. The catalysed reaction is Endonucleolytic cleavage to 5'-phosphomonoester.. Its function is as follows. Digests double-stranded RNA. Involved in the processing of primary rRNA transcript to yield the immediate precursors to the large and small rRNAs (23S and 16S). Processes some mRNAs, and tRNAs when they are encoded in the rRNA operon. Processes pre-crRNA and tracrRNA of type II CRISPR loci if present in the organism. The protein is Ribonuclease 3 of Pseudomonas syringae pv. tomato (strain ATCC BAA-871 / DC3000).